Here is a 519-residue protein sequence, read N- to C-terminus: Probable U3 small nucleolar RNA-associated protein 18 (519 aa).

WD repeat units lie at residues 26–66 (DKEN…MFDT), 71–111 (GAKD…RLMI), 216–254 (SHSG…NPLV), 259–298 (LRSS…VQKV), 306–345 (NFQP…FATS), 347–386 (KIEG…VVRR), 390–429 (QDGV…ADAA), 438–479 (NITF…VFRN), and 485–519 (TPLG…AHYD).

The protein belongs to the WD repeat UTP18 family. As to quaternary structure, component of the ribosomal small subunit (SSU) processome.

It is found in the nucleus. The protein resides in the nucleolus. Functionally, involved in nucleolar processing of pre-18S ribosomal RNA. This Schizosaccharomyces pombe (strain 972 / ATCC 24843) (Fission yeast) protein is Probable U3 small nucleolar RNA-associated protein 18.